A 436-amino-acid chain; its full sequence is Glutamyl-tRNA reductase (436 aa).

Residues 56-59, Ser114, 119-121, and Gln125 contribute to the substrate site; these read TCNR and EAQ. Cys57 functions as the Nucleophile in the catalytic mechanism. 194–199 is an NADP(+) binding site; sequence GAGEMI.

The protein belongs to the glutamyl-tRNA reductase family. In terms of assembly, homodimer.

It catalyses the reaction (S)-4-amino-5-oxopentanoate + tRNA(Glu) + NADP(+) = L-glutamyl-tRNA(Glu) + NADPH + H(+). It participates in porphyrin-containing compound metabolism; protoporphyrin-IX biosynthesis; 5-aminolevulinate from L-glutamyl-tRNA(Glu): step 1/2. Functionally, catalyzes the NADPH-dependent reduction of glutamyl-tRNA(Glu) to glutamate 1-semialdehyde (GSA). This chain is Glutamyl-tRNA reductase, found in Acidovorax sp. (strain JS42).